Reading from the N-terminus, the 392-residue chain is MASVEEIRNAQRAKGPATVLAIGTATPDNCLYQSDFADYYFRVTKSEHMTELKKKFNRICDKSMIKKRYIHLTEEMLEEHPNIGAYMAPSLNIRQEIITAEVPKLGKEAALKALKEWGQPKSKITHLVFCTTSGVEMPGADYKLANLLGLEPSVRRVMLYHQGCYAGGTVLRTAKDLAENNAGARVLVVCSEITVVTFRGPSEDALDSLVGQALFGDGSAAVIVGSDPDISIERPLFQLVSAAQTFIPNSAGAIAGNLREVGLTFHLWPNVPTLISENIENCLTKAFDPIGISDWNSLFWIAHPGGPAILDAVEAKVGLDKQKLKATRHILSEYGNMSSACVLFILDEMRKKSLKEGKTTTGEGLDWGVLFGFGPGLTIETVVLHSVGTDSN.

55 to 58 (KFNR) serves as a coordination point for substrate. Residue Cys164 is part of the active site. Substrate is bound by residues Leu267 and 305–307 (GGP).

The protein belongs to the thiolase-like superfamily. Chalcone/stilbene synthases family. In terms of assembly, homodimer.

Its subcellular location is the cytoplasm. The catalysed reaction is 4-coumaroyl-CoA + 3 malonyl-CoA + 3 H(+) = trans-resveratrol + 4 CO2 + 4 CoA. It participates in phytoalexin biosynthesis; 3,4',5-trihydroxystilbene biosynthesis; 3,4',5-trihydroxystilbene from trans-4-coumarate: step 2/2. In terms of biological role, mediates resistance to pathogens which are sensitive to stilbenes. In Vitis vinifera (Grape), this protein is Stilbene synthase 4.